Here is a 109-residue protein sequence, read N- to C-terminus: Parvalbumin alpha (109 aa).

EF-hand domains are found at residues 38–73 (KTDA…FSAH) and 77–109 (LNDT…VAQA). Ca(2+)-binding residues include Asp-51, Asp-53, Ser-55, Glu-62, Asp-90, Asp-92, Asp-94, Lys-96, and Glu-101.

It belongs to the parvalbumin family.

Functionally, in muscle, parvalbumin is thought to be involved in relaxation after contraction. It binds two calcium ions. The sequence is that of Parvalbumin alpha from Triakis semifasciata (Leopard shark).